A 340-amino-acid chain; its full sequence is Central glycolytic genes regulator (340 aa).

A DNA-binding region (H-T-H motif) is located at residues arginine 37 to glutamine 56. Beta-D-fructose 1,6-bisphosphate is bound by residues glycine 149–threonine 152, arginine 175, glutamine 185, arginine 250–arginine 251, glutamate 269, and lysine 310.

It belongs to the SorC transcriptional regulatory family. As to quaternary structure, homotetramer. Binds primarily as a dimer to each half-site of the full-length operator, with much higher affinity for the right site. Then, both dimers interact, bridging the two-half sites of the operator region.

With respect to regulation, stability and function are regulated by the effector molecule fructose-1,6-bisphosphate (FBP). In the presence of glucose, binding of FBP to the low-affinity sugar-binding site of CggR disrupts dimer/dimer bridging interactions and triggers a tetramer to dimer transition, which leaves two physically independent dimers on the target DNA and allows transcription of the downstream coding sequences by the RNA polymerase. In addition, FBP and several other phosphorylated compounds can bind to a high-affinity binding-site and protect CggR against aggregation and proteolysis. In the absence of glucose, represses the transcription of the gapA operon, which encodes five key glycolytic enzymes. Binds specifically to the cggR-gapA promoter region and blocks the progression of the RNA polymerase, leading to the arrest of the transcription. This is Central glycolytic genes regulator (cggR) from Bacillus subtilis (strain 168).